Here is a 372-residue protein sequence, read N- to C-terminus: Septin-1 (372 aa).

One can recognise a Septin-type G domain in the interval 27–301 (KGFDFTLMVA…EGYRARCLQS (275 aa)). Residues 37 to 44 (GESGLGKS) form a G1 motif region. Residues 37 to 44 (GESGLGKS), Thr-71, Gly-97, and 176 to 184 (KADALMPQE) each bind GTP. Positions 94–97 (DTPG) are G3 motif. Positions 175-178 (GKAD) are G4 motif. The residue at position 211 (Ser-211) is a Phosphoserine. 2 residues coordinate GTP: Gly-234 and Arg-250. Position 253 is a phosphoserine; by AURKB (Ser-253). At Thr-256 the chain carries Phosphothreonine. A phosphoserine; by AURKB mark is found at Ser-312 and Ser-320. A disordered region spans residues 352 to 372 (LEKMQAQMQQSQAQGEQSDAL). A compositionally biased stretch (low complexity) spans 355–372 (MQAQMQQSQAQGEQSDAL).

The protein belongs to the TRAFAC class TrmE-Era-EngA-EngB-Septin-like GTPase superfamily. Septin GTPase family. Septins polymerize into heterooligomeric protein complexes that form filaments, and can associate with cellular membranes, actin filaments and microtubules. GTPase activity is required for filament formation. Interacts with AURKB. Expressed at high levels in lymphoid and hematopoietic tissues.

The protein localises to the cytoplasm. It is found in the cytoskeleton. The protein resides in the microtubule organizing center. Its subcellular location is the centrosome. It localises to the midbody. In terms of biological role, filament-forming cytoskeletal GTPase. May play a role in cytokinesis (Potential). In Homo sapiens (Human), this protein is Septin-1.